Here is a 374-residue protein sequence, read N- to C-terminus: Protein-glutamate methylesterase/protein-glutamine glutaminase 1 (374 aa).

Residues 4 to 121 (KVLVVDDSSF…ATNKDEAILL (118 aa)) enclose the Response regulatory domain. A 4-aspartylphosphate modification is found at Asp55. Positions 141–170 (PSVAPVTPRPTTGSAVGNATTPVQSASAPV) are disordered. The segment covering 149–167 (RPTTGSAVGNATTPVQSAS) has biased composition (polar residues). The CheB-type methylesterase domain maps to 174 to 374 (PLSSIRASGK…ESILKESARG (201 aa)). Catalysis depends on residues Ser193, His220, and Asp316.

The protein belongs to the CheB family. Post-translationally, phosphorylated by CheA. Phosphorylation of the N-terminal regulatory domain activates the methylesterase activity.

The protein resides in the cytoplasm. The catalysed reaction is [protein]-L-glutamate 5-O-methyl ester + H2O = L-glutamyl-[protein] + methanol + H(+). It carries out the reaction L-glutaminyl-[protein] + H2O = L-glutamyl-[protein] + NH4(+). Involved in chemotaxis. Part of a chemotaxis signal transduction system that modulates chemotaxis in response to various stimuli. Catalyzes the demethylation of specific methylglutamate residues introduced into the chemoreceptors (methyl-accepting chemotaxis proteins or MCP) by CheR. Also mediates the irreversible deamidation of specific glutamine residues to glutamic acid. The chain is Protein-glutamate methylesterase/protein-glutamine glutaminase 1 from Shewanella oneidensis (strain ATCC 700550 / JCM 31522 / CIP 106686 / LMG 19005 / NCIMB 14063 / MR-1).